The following is a 74-amino-acid chain: Exodeoxyribonuclease 7 small subunit (74 aa).

This sequence belongs to the XseB family. Heterooligomer composed of large and small subunits.

The protein resides in the cytoplasm. The enzyme catalyses Exonucleolytic cleavage in either 5'- to 3'- or 3'- to 5'-direction to yield nucleoside 5'-phosphates.. Functionally, bidirectionally degrades single-stranded DNA into large acid-insoluble oligonucleotides, which are then degraded further into small acid-soluble oligonucleotides. The polypeptide is Exodeoxyribonuclease 7 small subunit (Symbiobacterium thermophilum (strain DSM 24528 / JCM 14929 / IAM 14863 / T)).